The sequence spans 289 residues: Elongation factor Ts (289 aa).

Residues 80-83 (TDFV) are involved in Mg(2+) ion dislocation from EF-Tu.

It belongs to the EF-Ts family.

It is found in the cytoplasm. In terms of biological role, associates with the EF-Tu.GDP complex and induces the exchange of GDP to GTP. It remains bound to the aminoacyl-tRNA.EF-Tu.GTP complex up to the GTP hydrolysis stage on the ribosome. The polypeptide is Elongation factor Ts (Francisella tularensis subsp. tularensis (strain FSC 198)).